A 397-amino-acid chain; its full sequence is UDP-GlcNAc:betaGal beta-1,3-N-acetylglucosaminyltransferase 7 (397 aa).

Residues 1–6 (MSLWKK) lie on the Cytoplasmic side of the membrane. Residues 7 to 26 (TLYKSVCLALALLVAVTVFQ) form a helical membrane-spanning segment. At 27-397 (RSVTPGQFLQ…LTCSVKFQVL (371 aa)) the chain is on the lumenal side. N-linked (GlcNAc...) asparagine glycans are attached at residues asparagine 84, asparagine 90, asparagine 210, and asparagine 387.

Belongs to the glycosyltransferase 31 family. Strongly expressed in placenta and colon. Moderately expressed in lung, stomach, small intestine and kidney. Very weakly expressed in cerebrum, cerebellum, heart and testis.

The protein localises to the golgi apparatus membrane. The protein operates within protein modification; protein glycosylation. N-acetyl glucosamine (GlcNAc) transferase that catalyzes the transfer of GlcNAc via a beta1-&gt;3 linkage from UDP-GlcNAc to the non-reducing terminal galactose (Gal) in the linearly growing chain of N- and O-linked keratan sulfate proteoglycans. Cooperates with B4GALT4 galactosyltransferase and CHST6 and CHST1 sulfotransferases to construct and elongate mono- and disulfated disaccharide units [-&gt;3Galbeta1-&gt;4(6-sulfoGlcNAcbeta)1-&gt;] and [-&gt;3(6-sulfoGalbeta)1-&gt;4(6-sulfoGlcNAcbeta)1-&gt;] within keratan sulfate polymer. Involved in biosynthesis of N-linked keratan sulfate proteoglycans in cornea, with an impact on proteoglycan fibril organization and corneal transparency. May play a role in the maintenance of tissue architecture by suppressing cellular motility and invasion. This is UDP-GlcNAc:betaGal beta-1,3-N-acetylglucosaminyltransferase 7 (B3gnt7) from Mus musculus (Mouse).